A 220-amino-acid polypeptide reads, in one-letter code: Probable cutinase 5 (220 aa).

Positions 1–18 (MVALHTLLLTAFAAVSLA) are cleaved as a signal peptide. Intrachain disulfides connect cysteine 42/cysteine 121 and cysteine 68/cysteine 82. Serine 132 serves as the catalytic Nucleophile. The cysteines at positions 183 and 190 are disulfide-linked. Aspartate 187 is a catalytic residue. Histidine 200 acts as the Proton donor/acceptor in catalysis.

Belongs to the cutinase family.

The protein resides in the secreted. It carries out the reaction cutin + H2O = cutin monomers.. Catalyzes the hydrolysis of complex carboxylic polyesters found in the cell wall of plants. Degrades cutin, a macromolecule that forms the structure of the plant cuticle. This is Probable cutinase 5 from Aspergillus terreus (strain NIH 2624 / FGSC A1156).